The chain runs to 45 residues: Cytochrome b559 subunit beta (45 aa).

Residues 20-36 (WLAVHTLGVPTVFFLGA) form a helical membrane-spanning segment. Residue His24 coordinates heme.

The protein belongs to the PsbE/PsbF family. As to quaternary structure, heterodimer of an alpha subunit and a beta subunit. PSII is composed of 1 copy each of membrane proteins PsbA, PsbB, PsbC, PsbD, PsbE, PsbF, PsbH, PsbI, PsbJ, PsbK, PsbL, PsbM, PsbT, PsbX, PsbY, PsbZ, Psb30/Ycf12, peripheral proteins PsbO, CyanoQ (PsbQ), PsbU, PsbV and a large number of cofactors. It forms dimeric complexes. Heme b serves as cofactor.

It localises to the cellular thylakoid membrane. This b-type cytochrome is tightly associated with the reaction center of photosystem II (PSII). PSII is a light-driven water:plastoquinone oxidoreductase that uses light energy to abstract electrons from H(2)O, generating O(2) and a proton gradient subsequently used for ATP formation. It consists of a core antenna complex that captures photons, and an electron transfer chain that converts photonic excitation into a charge separation. This is Cytochrome b559 subunit beta from Nostoc punctiforme (strain ATCC 29133 / PCC 73102).